Here is a 394-residue protein sequence, read N- to C-terminus: Elongation factor Tu (394 aa).

The 195-residue stretch at 10–204 folds into the tr-type G domain; sequence KPHINVGTIG…FLDSYIPEPK (195 aa). Residues 19–26 are G1; sequence GHVDHGKT. Position 19–26 (19–26) interacts with GTP; sequence GHVDHGKT. A Mg(2+)-binding site is contributed by Thr-26. The segment at 60–64 is G2; that stretch reads GITIN. The interval 81–84 is G3; sequence DCPG. Residues 81 to 85 and 136 to 139 each bind GTP; these read DCPGH and NKCD. The tract at residues 136–139 is G4; that stretch reads NKCD. Residues 174–176 form a G5 region; sequence SAL.

It belongs to the TRAFAC class translation factor GTPase superfamily. Classic translation factor GTPase family. EF-Tu/EF-1A subfamily. Monomer.

It is found in the cytoplasm. It carries out the reaction GTP + H2O = GDP + phosphate + H(+). Its function is as follows. GTP hydrolase that promotes the GTP-dependent binding of aminoacyl-tRNA to the A-site of ribosomes during protein biosynthesis. In Buchnera aphidicola subsp. Acyrthosiphon pisum (strain 5A), this protein is Elongation factor Tu.